The chain runs to 54 residues: LAAVDCSEYPKPACTLEYRPLCGSDSKTYGNKCNFCNAVVESNGTLTLSHFGKC.

Residues 4 to 54 (VDCSEYPKPACTLEYRPLCGSDSKTYGNKCNFCNAVVESNGTLTLSHFGKC) form the Kazal-like domain. 3 disulfide bridges follow: cysteine 6–cysteine 36, cysteine 14–cysteine 33, and cysteine 22–cysteine 54. Asparagine 43 carries an N-linked (GlcNAc...) asparagine glycan.

The protein resides in the secreted. The sequence is that of Ovomucoid from Alectoris chukar (Chukar partridge).